We begin with the raw amino-acid sequence, 445 residues long: Tyrosine--tRNA ligase, mitochondrial (445 aa).

L-tyrosine is bound at residue Tyr-33. Asp-37 contacts ATP. A 'HIGH' region motif is present at residues 38–47 (PTAASLHVGN). L-tyrosine-binding residues include Asp-77, Tyr-184, Gln-188, Asp-191, and Gln-210. The short motif at 245–249 (KLGKS) is the 'KMSKS' region element. Position 248 (Lys-248) interacts with ATP. Positions 384–445 (QPFSRLLRTL…GKRTFVLDSL (62 aa)) constitute an S4 RNA-binding domain.

This sequence belongs to the class-I aminoacyl-tRNA synthetase family. In terms of assembly, homodimer.

It is found in the mitochondrion matrix. The catalysed reaction is tRNA(Tyr) + L-tyrosine + ATP = L-tyrosyl-tRNA(Tyr) + AMP + diphosphate + H(+). Its function is as follows. Catalyzes the attachment of tyrosine to tRNA(Tyr) in a two-step reaction: tyrosine is first activated by ATP to form Tyr-AMP and then transferred to the acceptor end of tRNA(Tyr). The chain is Tyrosine--tRNA ligase, mitochondrial from Schizosaccharomyces pombe (strain 972 / ATCC 24843) (Fission yeast).